Reading from the N-terminus, the 305-residue chain is uncharacterized protein (305 aa).

The segment at 267 to 287 (ADEQEKNWNGGAKKNARAEPA) is disordered.

Belongs to the DnaB/DnaD family.

This is an uncharacterized protein from Listeria innocua serovar 6a (strain ATCC BAA-680 / CLIP 11262).